The primary structure comprises 327 residues: WRKY transcription factor WRKY76 (327 aa).

The stretch at 56–76 (AKIVEAKVTQMSEENRRLTEV) forms a coiled coil. The tract at residues 87–135 (RLGLDGSASPPRPVSPLSGKKRSRESMETANSCDANSNRHQGGDADHAE) is disordered. The Nuclear localization signal motif lies at 106 to 112 (KKRSRES). A compositionally biased stretch (polar residues) spans 114 to 126 (ETANSCDANSNRH). Positions 160 to 226 (DTSLVVKDGY…YEGEHNHPHP (67 aa)) form a DNA-binding region, WRKY.

Belongs to the WRKY group II-a family.

The protein resides in the nucleus. Transcription repressor. Interacts specifically with the W box (5'-(T)TGAC[CT]-3'), a frequently occurring elicitor-responsive cis-acting element. Regulates, probably indirectly, the activation of defense-related genes during defense response. Modulates plant innate immunity against X.oryzae pv. oryzae (Xoo). This Oryza sativa subsp. japonica (Rice) protein is WRKY transcription factor WRKY76.